A 318-amino-acid chain; its full sequence is Galactinol synthase 1 (318 aa).

Lys102 is a catalytic residue. Mn(2+)-binding residues include Asp118, Asp120, and His244.

It belongs to the glycosyltransferase 8 family. Galactosyltransferase subfamily. The cofactor is a divalent metal cation. As to expression, expressed in seeds, mostly in radicle tips.

Its subcellular location is the cytoplasm. It catalyses the reaction myo-inositol + UDP-alpha-D-galactose = alpha-D-galactosyl-(1-&gt;3)-1D-myo-inositol + UDP + H(+). Its function is as follows. Galactinol synthase involved in the biosynthesis of raffinose family oligosaccharides (RFOs) that function as osmoprotectants. May promote plant stress tolerance. In Solanum lycopersicum (Tomato), this protein is Galactinol synthase 1 (GOLS1).